The chain runs to 147 residues: MSINILKTLGDGRRYMKTWPMVRQLGLYFPEYRVVRATQLAILVMPVLAVLASVSQLYTYGWAFLPQALTIALFFISLPLQGLLWLGWRARHPLPLSLFDWSNQLSAKLTAMGIHCQSLGAKACYLDMALILKIAFERLDASYWEEL.

2 helical membrane passes run 40–60 (LAIL…LYTY) and 68–88 (ALTI…WLGW).

This sequence belongs to the UPF0208 family.

It localises to the cell inner membrane. This Shewanella oneidensis (strain ATCC 700550 / JCM 31522 / CIP 106686 / LMG 19005 / NCIMB 14063 / MR-1) protein is UPF0208 membrane protein SO_2914.